A 201-amino-acid chain; its full sequence is 3-isopropylmalate dehydratase small subunit (201 aa).

Belongs to the LeuD family. LeuD type 1 subfamily. In terms of assembly, heterodimer of LeuC and LeuD.

The catalysed reaction is (2R,3S)-3-isopropylmalate = (2S)-2-isopropylmalate. It participates in amino-acid biosynthesis; L-leucine biosynthesis; L-leucine from 3-methyl-2-oxobutanoate: step 2/4. Its function is as follows. Catalyzes the isomerization between 2-isopropylmalate and 3-isopropylmalate, via the formation of 2-isopropylmaleate. The polypeptide is 3-isopropylmalate dehydratase small subunit (Pasteurella multocida (strain Pm70)).